The chain runs to 274 residues: Large ribosomal subunit protein uL2 (274 aa).

Disordered stretches follow at residues 28 to 55 (APHAPLLEKKSKSGGRNNNGRITTRHVG) and 224 to 274 (VAMN…RRRK).

Belongs to the universal ribosomal protein uL2 family. As to quaternary structure, part of the 50S ribosomal subunit. Forms a bridge to the 30S subunit in the 70S ribosome.

Its function is as follows. One of the primary rRNA binding proteins. Required for association of the 30S and 50S subunits to form the 70S ribosome, for tRNA binding and peptide bond formation. It has been suggested to have peptidyltransferase activity; this is somewhat controversial. Makes several contacts with the 16S rRNA in the 70S ribosome. In Pseudomonas putida (strain GB-1), this protein is Large ribosomal subunit protein uL2.